The chain runs to 254 residues: Phycobilisome rod-core linker polypeptide CpcG3 (254 aa).

In terms of domain architecture, PBS-linker spans 11–191 (SSQNHRVKSF…DFQETAGTVK (181 aa)).

It belongs to the phycobilisome linker protein family. The phycobilisome is a hemidiscoidal structure that is composed of two distinct substructures: a core complex and a number of rods radiating from the core.

Its subcellular location is the cellular thylakoid membrane. Functionally, rod-core linker protein required for attachment of phycocyanin to allophycocyanin in cores of phycobilisomes. Its function is as follows. Linker polypeptides determine the state of aggregation and the location of the disk-shaped phycobiliprotein units within the phycobilisome and modulate their spectroscopic properties in order to mediate a directed and optimal energy transfer. The polypeptide is Phycobilisome rod-core linker polypeptide CpcG3 (cpcG3) (Mastigocladus laminosus (Fischerella sp.)).